Here is a 248-residue protein sequence, read N- to C-terminus: Isoprenyl transferase (248 aa).

Residue Asp-23 is part of the active site. Asp-23 is a Mg(2+) binding site. Substrate contacts are provided by residues 24-27 (GNGR), Trp-28, Arg-36, His-40, and 68-70 (STE). Catalysis depends on Asn-71, which acts as the Proton acceptor. Residues Trp-72, Arg-74, Arg-185, and 191 to 193 (RIS) contribute to the substrate site. A Mg(2+)-binding site is contributed by Glu-204.

Belongs to the UPP synthase family. As to quaternary structure, homodimer. Mg(2+) is required as a cofactor.

Catalyzes the condensation of isopentenyl diphosphate (IPP) with allylic pyrophosphates generating different type of terpenoids. In Neisseria gonorrhoeae (strain ATCC 700825 / FA 1090), this protein is Isoprenyl transferase.